The following is a 122-amino-acid chain: Large ribosomal subunit protein uL14 (122 aa).

Belongs to the universal ribosomal protein uL14 family. Part of the 50S ribosomal subunit. Forms a cluster with proteins L3 and L19. In the 70S ribosome, L14 and L19 interact and together make contacts with the 16S rRNA in bridges B5 and B8.

Functionally, binds to 23S rRNA. Forms part of two intersubunit bridges in the 70S ribosome. In Cupriavidus metallidurans (strain ATCC 43123 / DSM 2839 / NBRC 102507 / CH34) (Ralstonia metallidurans), this protein is Large ribosomal subunit protein uL14.